The chain runs to 91 residues: Signal recognition particle 19 kDa protein (91 aa).

Belongs to the SRP19 family. As to quaternary structure, part of the signal recognition particle protein translocation system, which is composed of SRP and FtsY. Archaeal SRP consists of a 7S RNA molecule of 300 nucleotides and two protein subunits: SRP54 and SRP19.

It is found in the cytoplasm. In terms of biological role, involved in targeting and insertion of nascent membrane proteins into the cytoplasmic membrane. Binds directly to 7S RNA and mediates binding of the 54 kDa subunit of the SRP. In Methanoregula boonei (strain DSM 21154 / JCM 14090 / 6A8), this protein is Signal recognition particle 19 kDa protein.